Here is a 744-residue protein sequence, read N- to C-terminus: Glucosamine inositolphosphorylceramide transferase 1 (744 aa).

Transmembrane regions (helical) follow at residues Phe-31 to Val-51, Ser-378 to Val-398, and Leu-460 to Leu-480. Substrate-binding positions include Asn-534, Asn-558–Arg-563, Asp-579–Asp-581, Arg-609, and Phe-665–Asp-669. Position 581 (Asp-581) interacts with Mn(2+). Cysteines 667 and 718 form a disulfide. The active site involves Asp-669.

The protein belongs to the glycosyltransferase 64 family. Mn(2+) is required as a cofactor.

The protein resides in the membrane. It participates in sphingolipid metabolism. Its function is as follows. Essential protein. Glycosyltransferase that mediates the glycosylation of glycosylinositol phosphorylceramides (GIPCs), the major sphingolipids in the plasma membrane; acts as a HexN(Ac)-specific GIPC sugar transferase. Responsible for the glycosylation of a subgroup of GIPCs found in seeds and pollen that contain GlcNAc and GlcN (GlcN(Ac)). Maybe involved in the maintenance of cell-cell adhesion. The polypeptide is Glucosamine inositolphosphorylceramide transferase 1 (Oryza sativa subsp. indica (Rice)).